The primary structure comprises 413 residues: Synaptosomal-associated protein 47 (413 aa).

The t-SNARE coiled-coil homology 1 domain maps to 109-171 (AANIPSHVTR…DVADRLLTEL (63 aa)). The tract at residues 321–342 (RHAASRPKGCTPHRELPTGGQE) is disordered. Positions 350-412 (KNLPLFSEGE…DKQNRRMRKL (63 aa)) constitute a t-SNARE coiled-coil homology 2 domain.

The protein belongs to the SVAP1 family. Associates with the BLOC-1 complex. Interacts with BLOC1S6. Forms a complex containing SNAP47, VAMP2 and STX1A. As to expression, ubiquitously expressed with the most abundant expression in the brain. In brain, most highly expressed in the glomerular layer of the olfactory bulb, the cortex, striatum, hippocampus, and colliculi (at protein level).

The protein localises to the endomembrane system. The protein resides in the cytoplasm. Its subcellular location is the perinuclear region. In terms of biological role, may play a role in intracellular membrane fusion. The protein is Synaptosomal-associated protein 47 (Snap47) of Mus musculus (Mouse).